The sequence spans 110 residues: Nucleoid-associated protein ESA_02800 (110 aa).

Positions 89–110 are disordered; the sequence is QKEKMASVSSGMQLPPGFKMPF.

The protein belongs to the YbaB/EbfC family. In terms of assembly, homodimer.

It is found in the cytoplasm. The protein localises to the nucleoid. Its function is as follows. Binds to DNA and alters its conformation. May be involved in regulation of gene expression, nucleoid organization and DNA protection. The sequence is that of Nucleoid-associated protein ESA_02800 from Cronobacter sakazakii (strain ATCC BAA-894) (Enterobacter sakazakii).